A 1823-amino-acid chain; its full sequence is Bromodomain-containing protein DDB_G0280777 (1823 aa).

Disordered regions lie at residues 44–83 (DNNNNKRFNENGNQINQIDFNSNKEEEKEEKEEKEKEEDE) and 200–281 (LKQT…RTTS). Residues 65 to 77 (SNKEEEKEEKEEK) show a composition bias toward basic and acidic residues. Basic residues predominate over residues 210–224 (KRRNQQHQNLLKKQK). Residues 225–250 (IQKEKEEREQKEKEQKEKEQKEKEEQ) are compositionally biased toward basic and acidic residues. The segment covering 251–262 (QQQLFLLQQQQQ) has biased composition (low complexity). The 108-residue stretch at 306 to 413 (EAQEEMYDQL…KKSKDLMKNV (108 aa)) folds into the Bromo domain. Disordered regions lie at residues 429–654 (ENKN…EEQT), 753–781 (NCNNNNNNNDNNNNNNIDNDNDNNNNNSL), 855–886 (INDNDDDNNNNNNNNNNNNNNNNNNNNNNNKP), 949–993 (NSSK…DEDF), 1055–1079 (LPNNKSTTTQTTPTTQLQPPPPPPS), 1190–1386 (IDPK…IQAS), 1453–1477 (QLQQQTRQPSQPQTPQMQSQPQTPQ), and 1679–1823 (QQQQ…QKKQ). 4 stretches are compositionally biased toward low complexity: residues 432-486 (NNNN…NTPL), 494-511 (CSPSTISTVSSTPTTPQS), 520-555 (QQQQQQQTQAQQQPTSNSPRNTTTTTTTITSPISPR), and 570-579 (SSSSLSSSSL). Polar residues predominate over residues 580-590 (ALNSQNENGVN). The span at 601–614 (MESEESTNVKKEEN) shows a compositional bias: basic and acidic residues. Residues 631–643 (EGEEQQEQEDEEQ) are compositionally biased toward acidic residues. 5 stretches are compositionally biased toward low complexity: residues 753 to 779 (NCNNNNNNNDNNNNNNIDNDNDNNNNN), 863 to 884 (NNNNNNNNNNNNNNNNNNNNNN), 949 to 958 (NSSKSNNNSN), 1055 to 1071 (LPNNKSTTTQTTPTTQL), and 1205 to 1378 (NNNN…NNNN). Residues 1679–1705 (QQQQPQQQQQQPQQQPQQQPQQQQQPQ) are compositionally biased toward low complexity. Composition is skewed to basic and acidic residues over residues 1716-1737 (PKEKDKEREKEKEREREKEKDR) and 1744-1755 (KTESKKESKKSL). Low complexity-rich tracts occupy residues 1756-1767 (NDSSNSDINTSV) and 1789-1806 (SSKQPQTTQSNTTTTQDS). A compositionally biased stretch (basic residues) spans 1813–1823 (KKKRGRPQKKQ).

In Dictyostelium discoideum (Social amoeba), this protein is Bromodomain-containing protein DDB_G0280777.